The following is a 122-amino-acid chain: Large ribosomal subunit protein bL12 (122 aa).

The protein belongs to the bacterial ribosomal protein bL12 family. In terms of assembly, homodimer. Part of the ribosomal stalk of the 50S ribosomal subunit. Forms a multimeric L10(L12)X complex, where L10 forms an elongated spine to which 2 to 4 L12 dimers bind in a sequential fashion. Binds GTP-bound translation factors.

Forms part of the ribosomal stalk which helps the ribosome interact with GTP-bound translation factors. Is thus essential for accurate translation. The protein is Large ribosomal subunit protein bL12 of Deinococcus geothermalis (strain DSM 11300 / CIP 105573 / AG-3a).